The primary structure comprises 171 residues: Protein phosphatase 1 regulatory subunit 1A (171 aa).

Met-1 is subject to N-acetylmethionine. Residues 9-12 (KIQF) form an essential for activity region. The interval 17–171 (LEPHLDPEAA…PLDSQGASLV (155 aa)) is disordered. Residues 19–29 (PHLDPEAAEQI) are compositionally biased toward basic and acidic residues. Phosphothreonine; by PKA is present on Thr-35. Residues 42–54 (TSDQSSPEVDEDR) are essential for activity. Ser-43, Ser-46, Ser-47, and Ser-67 each carry phosphoserine. Residues 122–133 (GSASRPDTSGTA) are compositionally biased toward polar residues. The segment covering 137-148 (AESKPKTQEQRG) has biased composition (basic and acidic residues). Positions 143 to 171 (TQEQRGVEPSTEDLSAHMLPLDSQGASLV) are interaction with PPP1R15A.

This sequence belongs to the protein phosphatase inhibitor 1 family. In terms of assembly, interacts with PPP1R15A. Post-translationally, phosphorylation of Thr-35 is required for activity.

Its function is as follows. Inhibitor of protein-phosphatase 1. This protein may be important in hormonal control of glycogen metabolism. Hormones that elevate intracellular cAMP increase I-1 activity in many tissues. I-1 activation may impose cAMP control over proteins that are not directly phosphorylated by PKA. Following a rise in intracellular calcium, I-1 is inactivated by calcineurin (or PP2B). Does not inhibit type-2 phosphatases. This is Protein phosphatase 1 regulatory subunit 1A (Ppp1r1a) from Rattus norvegicus (Rat).